The following is a 282-amino-acid chain: Bifunctional protein FolD (282 aa).

NADP(+) is bound by residues 164 to 166, isoleucine 189, and isoleucine 230; that span reads GAS.

Belongs to the tetrahydrofolate dehydrogenase/cyclohydrolase family. Homodimer.

It carries out the reaction (6R)-5,10-methylene-5,6,7,8-tetrahydrofolate + NADP(+) = (6R)-5,10-methenyltetrahydrofolate + NADPH. The catalysed reaction is (6R)-5,10-methenyltetrahydrofolate + H2O = (6R)-10-formyltetrahydrofolate + H(+). It functions in the pathway one-carbon metabolism; tetrahydrofolate interconversion. Catalyzes the oxidation of 5,10-methylenetetrahydrofolate to 5,10-methenyltetrahydrofolate and then the hydrolysis of 5,10-methenyltetrahydrofolate to 10-formyltetrahydrofolate. The polypeptide is Bifunctional protein FolD (Campylobacter jejuni subsp. jejuni serotype O:6 (strain 81116 / NCTC 11828)).